Here is a 520-residue protein sequence, read N- to C-terminus: Fumarate hydratase, mitochondrial (520 aa).

Residues 1–39 (MASVAHISTAKAIFRAGGLPCRRLITPTLTGLPLKTHRM) constitute a mitochondrion transit peptide. Substrate-binding positions include 153-155 (SGT), 184-187 (HPND), 194-196 (SSN), and Thr242. Catalysis depends on His243, which acts as the Proton donor/acceptor. The active site involves Ser373. Residues Ser374 and 379-381 (KVN) contribute to the substrate site.

The protein belongs to the class-II fumarase/aspartase family. Fumarase subfamily. As to quaternary structure, homotetramer.

The protein resides in the mitochondrion matrix. Its subcellular location is the cytoplasm. The protein localises to the nucleus. It catalyses the reaction (S)-malate = fumarate + H2O. It functions in the pathway carbohydrate metabolism; tricarboxylic acid cycle; (S)-malate from fumarate: step 1/1. Its function is as follows. Catalyzes the reversible stereospecific interconversion of fumarate to L-malate. In mitochondrion, catalyzes the hydration of fumarate to L-malate in the tricarboxylic acid (TCA) cycle to facilitate a transition step in the production of energy in the form of NADH. In cytoplasm and nucleus, involved in DNA repair in response to DNA damage: following DNA double-strand breaks (DSBs), translocates from the cytosol to the nucleus and promotes DNA repair by catalyzing the dehydration of L-malate to fumarate. The sequence is that of Fumarate hydratase, mitochondrial (fum1) from Schizosaccharomyces pombe (strain 972 / ATCC 24843) (Fission yeast).